Consider the following 896-residue polypeptide: Vacuolar zinc transporter TgZnT (896 aa).

Residues 1–472 (MPFSCFVFSQ…ETGTQRARRK (472 aa)) lie on the Cytoplasmic side of the membrane. Residues 82–91 (VLSSRGDESV) show a composition bias toward basic and acidic residues. 3 disordered regions span residues 82–104 (VLSS…SPGF), 205–227 (MKEI…RPCA), and 255–329 (SSSC…SSAS). Composition is skewed to low complexity over residues 210-225 (SPRS…SSRP) and 255-266 (SSSCCSRSNSSS). A compositionally biased stretch (basic and acidic residues) spans 303–322 (VHERRAEATCCAPRDRHGGD). Residues 473-493 (LVMASMVCCVFMFVEIVAGVL) traverse the membrane as a helical segment. Over 494–502 (ANSLALMTD) the chain is Vacuolar. Residues 503 to 523 (ASHLLSDLCAFLISLFALWVS) traverse the membrane as a helical segment. Residues 524-539 (ELKGNPSMSFGYHRAE) are Cytoplasmic-facing. The chain crosses the membrane as a helical span at residues 540 to 560 (ILGALLSVFLIWVLTAVLIYA). Residues 561–573 (ACFRLVDPPQVDG) lie on the Vacuolar side of the membrane. The chain crosses the membrane as a helical span at residues 574 to 594 (ELMFWTALLGTLANLFMTHIL). Topologically, residues 595-737 (KVHSHGIGQV…YENMNLRAAY (143 aa)) are cytoplasmic. The interval 621 to 707 (LQASSSSPEK…RPFSASSAGS (87 aa)) is disordered. Residues 656 to 680 (RDAEAGRDAEAGRDAEAGRDAETGR) show a composition bias toward basic and acidic residues. Residues 738–758 (IHALGDLLQNIGVMIASALIW) traverse the membrane as a helical segment. Topologically, residues 759 to 762 (WRPD) are vacuolar. Residues 763-783 (WAIADPICTFIFSIFVLFTTL) form a helical membrane-spanning segment. Topologically, residues 784-896 (SILKEALNVL…CSDPMKVFRR (113 aa)) are cytoplasmic.

Belongs to the cation diffusion facilitator (CDF) transporter (TC 2.A.4) family. SLC30A subfamily.

Its subcellular location is the vacuole membrane. It is found in the cytoplasmic vesicle membrane. Functionally, vacuolar zinc transporter that is probably involved in the transfer of zinc ions from the cytosol to the vacuole for intracellular storage. Plays an essential role in extracellular zinc tolerance. The protein is Vacuolar zinc transporter TgZnT of Toxoplasma gondii (strain ATCC 50853 / GT1).